A 130-amino-acid polypeptide reads, in one-letter code: Protein ApaG (130 aa).

Positions 3–127 constitute an ApaG domain; the sequence is KAETRGITVT…FSLDSPHLRR (125 aa).

The protein is Protein ApaG of Methylorubrum populi (strain ATCC BAA-705 / NCIMB 13946 / BJ001) (Methylobacterium populi).